Consider the following 518-residue polypeptide: Glutamate--cysteine ligase (518 aa).

It belongs to the glutamate--cysteine ligase type 1 family. Type 1 subfamily.

It catalyses the reaction L-cysteine + L-glutamate + ATP = gamma-L-glutamyl-L-cysteine + ADP + phosphate + H(+). It functions in the pathway sulfur metabolism; glutathione biosynthesis; glutathione from L-cysteine and L-glutamate: step 1/2. The sequence is that of Glutamate--cysteine ligase from Salmonella typhi.